We begin with the raw amino-acid sequence, 398 residues long: Ribosomal RNA large subunit methyltransferase F (398 aa).

Over residues 1–12 the composition is skewed to basic residues; sequence MTPSRKPARPGA. Residues 1 to 85 form a disordered region; sequence MTPSRKPARP…RNLHGQGYDF (85 aa). Composition is skewed to low complexity over residues 20–40 and 48–59; these read PSAK…AQPK and QAKSQAKPQAKS.

It belongs to the methyltransferase superfamily. METTL16/RlmF family.

The protein localises to the cytoplasm. The enzyme catalyses adenosine(1618) in 23S rRNA + S-adenosyl-L-methionine = N(6)-methyladenosine(1618) in 23S rRNA + S-adenosyl-L-homocysteine + H(+). Its function is as follows. Specifically methylates the adenine in position 1618 of 23S rRNA. The chain is Ribosomal RNA large subunit methyltransferase F from Shewanella loihica (strain ATCC BAA-1088 / PV-4).